Consider the following 200-residue polypeptide: Small ribosomal subunit protein uS4 (200 aa).

The segment at 22-43 is disordered; sequence TGKELERRPYAPGQHGPTQRKK. An S4 RNA-binding domain is found at 92–170; that stretch reads QRLDNIVYRL…VPEYVTFDAE (79 aa).

This sequence belongs to the universal ribosomal protein uS4 family. As to quaternary structure, part of the 30S ribosomal subunit. Contacts protein S5. The interaction surface between S4 and S5 is involved in control of translational fidelity.

Functionally, one of the primary rRNA binding proteins, it binds directly to 16S rRNA where it nucleates assembly of the body of the 30S subunit. Its function is as follows. With S5 and S12 plays an important role in translational accuracy. The chain is Small ribosomal subunit protein uS4 from Listeria monocytogenes serovar 1/2a (strain ATCC BAA-679 / EGD-e).